A 510-amino-acid chain; its full sequence is MDGFYDQQVPFMVPGKSRSEECRGRPVIDRKRKFLDTDLAHDSEELFQDLSQLQEAWLAEAQVPDDEQFVPDFQSDNLVLHAPPPTKIKRELHSPSSELSSCSHEQALGANYGEKCLYNYCAYDRKPPSGFKPLTPPTTPLSPTHQNPLFPPPQATLPTSGHAPAAGPVQGVGPAPAPHSLPEPGPQQQTFAVPRPPHQPLQMPKMMPENQYPSEQRFQRQLSEPCHPFPPQPGVPGDNRPSYHRQMSEPIVPAAPPPPQGFKQEYHDPLYEHGVPGMPGPPAHGFQSPMGIKQEPRDYCVDSEVPNCQSSYMRGGYFSSSHEGFSYEKDPRLYFDDTCVVPERLEGKVKQEPTMYREGPPYQRRGSLQLWQFLVTLLDDPANAHFIAWTGRGMEFKLIEPEEVARRWGIQKNRPAMNYDKLSRSLRYYYEKGIMQKVAGERYVYKFVCDPDALFSMAFPDNQRPFLKAESECHLSEEDTLPLTHFEDSPAYLLDMDRCSSLPYAEGFAY.

Residues 131–208 form a disordered region; that stretch reads FKPLTPPTTP…QPLQMPKMMP (78 aa). A compositionally biased stretch (low complexity) spans 161–174; that stretch reads GHAPAAGPVQGVGP. A compositionally biased stretch (pro residues) spans 175–185; it reads APAPHSLPEPG. S248 is modified (phosphoserine). A Glycyl lysine isopeptide (Lys-Gly) (interchain with G-Cter in SUMO2) cross-link involves residue K350. Residues 368 to 448 constitute a DNA-binding region (ETS); sequence LQLWQFLVTL…AGERYVYKFV (81 aa).

As to quaternary structure, interacts (via C-terminal) with ZMYM5 (via N-terminal 120 amino acid region). As to expression, ubiquitous.

It localises to the nucleus. Its function is as follows. Binds to DNA sequences containing the consensus nucleotide core sequence 5'-GGAA.-3'. This chain is ETS translocation variant 5 (ETV5), found in Homo sapiens (Human).